The following is a 179-amino-acid chain: Large ribosomal subunit protein uL5 (179 aa).

It belongs to the universal ribosomal protein uL5 family. In terms of assembly, part of the 50S ribosomal subunit; part of the 5S rRNA/L5/L18/L25 subcomplex. Contacts the 5S rRNA and the P site tRNA. Forms a bridge to the 30S subunit in the 70S ribosome.

Its function is as follows. This is one of the proteins that bind and probably mediate the attachment of the 5S RNA into the large ribosomal subunit, where it forms part of the central protuberance. In the 70S ribosome it contacts protein S13 of the 30S subunit (bridge B1b), connecting the 2 subunits; this bridge is implicated in subunit movement. Contacts the P site tRNA; the 5S rRNA and some of its associated proteins might help stabilize positioning of ribosome-bound tRNAs. The polypeptide is Large ribosomal subunit protein uL5 (Yersinia pestis).